Here is a 429-residue protein sequence, read N- to C-terminus: Serine hydroxymethyltransferase 1 (429 aa).

Residues leucine 125 and 129–131 (GHL) contribute to the (6S)-5,6,7,8-tetrahydrofolate site. Lysine 234 is subject to N6-(pyridoxal phosphate)lysine.

This sequence belongs to the SHMT family. Homodimer. Requires pyridoxal 5'-phosphate as cofactor.

Its subcellular location is the cytoplasm. The catalysed reaction is (6R)-5,10-methylene-5,6,7,8-tetrahydrofolate + glycine + H2O = (6S)-5,6,7,8-tetrahydrofolate + L-serine. Its pathway is one-carbon metabolism; tetrahydrofolate interconversion. It participates in amino-acid biosynthesis; glycine biosynthesis; glycine from L-serine: step 1/1. Catalyzes the reversible interconversion of serine and glycine with tetrahydrofolate (THF) serving as the one-carbon carrier. This reaction serves as the major source of one-carbon groups required for the biosynthesis of purines, thymidylate, methionine, and other important biomolecules. Also exhibits THF-independent aldolase activity toward beta-hydroxyamino acids, producing glycine and aldehydes, via a retro-aldol mechanism. In Agrobacterium fabrum (strain C58 / ATCC 33970) (Agrobacterium tumefaciens (strain C58)), this protein is Serine hydroxymethyltransferase 1.